The following is a 159-amino-acid chain: Ribosomal RNA large subunit methyltransferase H (159 aa).

S-adenosyl-L-methionine-binding positions include Leu76, Gly108, and 127–132 (FSPMTF).

It belongs to the RNA methyltransferase RlmH family. In terms of assembly, homodimer.

Its subcellular location is the cytoplasm. It carries out the reaction pseudouridine(1915) in 23S rRNA + S-adenosyl-L-methionine = N(3)-methylpseudouridine(1915) in 23S rRNA + S-adenosyl-L-homocysteine + H(+). Functionally, specifically methylates the pseudouridine at position 1915 (m3Psi1915) in 23S rRNA. In Alkaliphilus metalliredigens (strain QYMF), this protein is Ribosomal RNA large subunit methyltransferase H.